The sequence spans 240 residues: Ubiquinone biosynthesis O-methyltransferase (240 aa).

S-adenosyl-L-methionine is bound by residues R44, G64, D85, and M129.

It belongs to the methyltransferase superfamily. UbiG/COQ3 family.

The catalysed reaction is a 3-demethylubiquinol + S-adenosyl-L-methionine = a ubiquinol + S-adenosyl-L-homocysteine + H(+). It carries out the reaction a 3-(all-trans-polyprenyl)benzene-1,2-diol + S-adenosyl-L-methionine = a 2-methoxy-6-(all-trans-polyprenyl)phenol + S-adenosyl-L-homocysteine + H(+). It participates in cofactor biosynthesis; ubiquinone biosynthesis. O-methyltransferase that catalyzes the 2 O-methylation steps in the ubiquinone biosynthetic pathway. This is Ubiquinone biosynthesis O-methyltransferase from Photorhabdus laumondii subsp. laumondii (strain DSM 15139 / CIP 105565 / TT01) (Photorhabdus luminescens subsp. laumondii).